Here is a 469-residue protein sequence, read N- to C-terminus: Bifunctional protein GlmU (469 aa).

A pyrophosphorylase region spans residues 1 to 236; sequence MLNIKLNIVI…ISEINGINDC (236 aa). Residues 11 to 14, lysine 25, glutamine 83, 88 to 89, 110 to 112, glycine 147, glutamate 161, asparagine 176, and asparagine 234 contribute to the UDP-N-acetyl-alpha-D-glucosamine site; these read LAAG, GT, and YGD. Aspartate 112 is a Mg(2+) binding site. Asparagine 234 contributes to the Mg(2+) binding site. The tract at residues 237–257 is linker; the sequence is AQLANLERLYQKEQAESLLRI. Residues 258–469 are N-acetyltransferase; that stretch reads GVIIADPNRF…KKKIRYNIIY (212 aa). UDP-N-acetyl-alpha-D-glucosamine-binding residues include arginine 340 and lysine 358. Catalysis depends on histidine 370, which acts as the Proton acceptor. UDP-N-acetyl-alpha-D-glucosamine is bound by residues tyrosine 373 and asparagine 384. Residues alanine 387, 393–394, serine 412, alanine 430, and arginine 447 contribute to the acetyl-CoA site; that span reads NY.

It in the N-terminal section; belongs to the N-acetylglucosamine-1-phosphate uridyltransferase family. In the C-terminal section; belongs to the transferase hexapeptide repeat family. As to quaternary structure, homotrimer. Requires Mg(2+) as cofactor.

The protein localises to the cytoplasm. It carries out the reaction alpha-D-glucosamine 1-phosphate + acetyl-CoA = N-acetyl-alpha-D-glucosamine 1-phosphate + CoA + H(+). The enzyme catalyses N-acetyl-alpha-D-glucosamine 1-phosphate + UTP + H(+) = UDP-N-acetyl-alpha-D-glucosamine + diphosphate. It functions in the pathway nucleotide-sugar biosynthesis; UDP-N-acetyl-alpha-D-glucosamine biosynthesis; N-acetyl-alpha-D-glucosamine 1-phosphate from alpha-D-glucosamine 6-phosphate (route II): step 2/2. The protein operates within nucleotide-sugar biosynthesis; UDP-N-acetyl-alpha-D-glucosamine biosynthesis; UDP-N-acetyl-alpha-D-glucosamine from N-acetyl-alpha-D-glucosamine 1-phosphate: step 1/1. Its pathway is bacterial outer membrane biogenesis; LPS lipid A biosynthesis. In terms of biological role, catalyzes the last two sequential reactions in the de novo biosynthetic pathway for UDP-N-acetylglucosamine (UDP-GlcNAc). The C-terminal domain catalyzes the transfer of acetyl group from acetyl coenzyme A to glucosamine-1-phosphate (GlcN-1-P) to produce N-acetylglucosamine-1-phosphate (GlcNAc-1-P), which is converted into UDP-GlcNAc by the transfer of uridine 5-monophosphate (from uridine 5-triphosphate), a reaction catalyzed by the N-terminal domain. This chain is Bifunctional protein GlmU, found in Baumannia cicadellinicola subsp. Homalodisca coagulata.